The sequence spans 119 residues: MISKPDKNKTRQRRHARVRGKISGTSERPRLNIFRSNKNIYAQLIDDVAGVTLASASTLDKDIKDPENKTAASAQVGALIAKRAVADGHKVVVFDRGGYLYHGRVAALAEAARENGLEF.

The segment at 1–23 (MISKPDKNKTRQRRHARVRGKIS) is disordered. Residues 10–20 (TRQRRHARVRG) show a composition bias toward basic residues.

This sequence belongs to the universal ribosomal protein uL18 family. As to quaternary structure, part of the 50S ribosomal subunit; part of the 5S rRNA/L5/L18/L25 subcomplex. Contacts the 5S and 23S rRNAs.

Functionally, this is one of the proteins that bind and probably mediate the attachment of the 5S RNA into the large ribosomal subunit, where it forms part of the central protuberance. The protein is Large ribosomal subunit protein uL18 of Lacticaseibacillus casei (strain BL23) (Lactobacillus casei).